Reading from the N-terminus, the 177-residue chain is MAKENRRKNNRNKEKDSTWQERVVQIRRVSKVVKGGKKLSFRAIVVVGNERGQVGVGVGKASDVIGAVRKGVADGKKQLVEVPLTRSNSIPHPMIGRGGAAKVMMRPAAPGTGVIAGGAVRTVLELAGVRNVLAKQLGSDNPLNNARATLHALASLRTFSEVAGERGIEVEKLYAAT.

The S5 DRBM domain maps to 19-82 (WQERVVQIRR…ADGKKQLVEV (64 aa)).

The protein belongs to the universal ribosomal protein uS5 family. Part of the 30S ribosomal subunit. Contacts proteins S4 and S8.

Functionally, with S4 and S12 plays an important role in translational accuracy. Located at the back of the 30S subunit body where it stabilizes the conformation of the head with respect to the body. This is Small ribosomal subunit protein uS5 from Acaryochloris marina (strain MBIC 11017).